Reading from the N-terminus, the 163-residue chain is NAD(P)H-quinone oxidoreductase subunit I, chloroplastic (163 aa).

4Fe-4S ferredoxin-type domains follow at residues 55-84 and 95-124; these read GRIH…VDWR and LNYS…MTEE. Residues Cys64, Cys67, Cys70, Cys74, Cys104, Cys107, Cys110, and Cys114 each contribute to the [4Fe-4S] cluster site.

The protein belongs to the complex I 23 kDa subunit family. In terms of assembly, NDH is composed of at least 16 different subunits, 5 of which are encoded in the nucleus. The cofactor is [4Fe-4S] cluster.

Its subcellular location is the plastid. The protein resides in the chloroplast thylakoid membrane. The catalysed reaction is a plastoquinone + NADH + (n+1) H(+)(in) = a plastoquinol + NAD(+) + n H(+)(out). The enzyme catalyses a plastoquinone + NADPH + (n+1) H(+)(in) = a plastoquinol + NADP(+) + n H(+)(out). NDH shuttles electrons from NAD(P)H:plastoquinone, via FMN and iron-sulfur (Fe-S) centers, to quinones in the photosynthetic chain and possibly in a chloroplast respiratory chain. The immediate electron acceptor for the enzyme in this species is believed to be plastoquinone. Couples the redox reaction to proton translocation, and thus conserves the redox energy in a proton gradient. The protein is NAD(P)H-quinone oxidoreductase subunit I, chloroplastic (ndhI) of Phoenix dactylifera (Date palm).